We begin with the raw amino-acid sequence, 159 residues long: CASP-like protein 1C1 (159 aa).

The Cytoplasmic portion of the chain corresponds to methionine 1–arginine 6. A helical membrane pass occupies residues isoleucine 7–methionine 27. The Extracellular portion of the chain corresponds to valine 28–alanine 50. Asparagine 38 carries an N-linked (GlcNAc...) asparagine glycan. Residues phenylalanine 51–phenylalanine 73 traverse the membrane as a helical segment. Topologically, residues serine 74–valine 86 are cytoplasmic. Residues phenylalanine 87 to lysine 107 traverse the membrane as a helical segment. Residues lysine 108–threonine 130 are Extracellular-facing. A helical transmembrane segment spans residues glycine 131–isoleucine 151. The Cytoplasmic segment spans residues histidine 152–proline 159.

The protein belongs to the Casparian strip membrane proteins (CASP) family. As to quaternary structure, homodimer and heterodimers.

The protein resides in the cell membrane. In Vitis vinifera (Grape), this protein is CASP-like protein 1C1.